The sequence spans 234 residues: Transmembrane protein 65 (234 aa).

The transit peptide at 1-55 (MSRLLPLLGSRTARSLRPGPAAAPRLPSWCCCGRGLLALGVPGGPRLLGTHPKKE) directs the protein to the mitochondrion. Residues 56–110 (PMEALNTAQGARDFIYSLHSTERSCLLKELHRFESIAIAQEKLEALPPTPGQLRY) lie on the Cytoplasmic side of the membrane. The chain crosses the membrane as a helical span at residues 111–131 (VFFHNAIPFVGFGFLDNAIMI). The Extracellular segment spans residues 132-138 (VAGTQIE). Residues 139-159 (LSIGIILGISTMAAAALGNLV) traverse the membrane as a helical segment. Residues 160 to 203 (SDLAGLGLAGYVEALASRLGLSIPDLTPKQVDMWQTRVSTHLGK) lie on the Cytoplasmic side of the membrane. The helical transmembrane segment at 204-224 (AVGVTIGCILGMFPLIFFGGS) threads the bilayer. At 225–234 (EEDEKLETTN) the chain is on the extracellular side.

As to quaternary structure, monomer. Homodimer. Interacts with GJA1. Interacts weakly with DSP. Interacts with SCN1B. Predominantly expressed in the ventricular tissue (at protein level).

The protein localises to the cell membrane. The protein resides in the mitochondrion inner membrane. Essential for maintaining proper cardiac intercalated disk (ICD) structure and function as well as cardiac conduction velocity in the heart. Its association with SCN1B is required for stabilizing the perinexus in the ICD and for localization of GJA1 and SCN5A to the ICD. May regulate the function of the gap junction protein GJA1 and may contribute to the stability and proper localization of GJA1 to cardiac intercalated disk thereby regulating gap junction communication. Regulates mitochondrial respiration and mitochondrial DNA copy number maintenance. This Mus musculus (Mouse) protein is Transmembrane protein 65 (Tmem65).